The sequence spans 880 residues: Interference hedgehog (880 aa).

The N-terminal stretch at 1–20 (MTLLTSSLLLFSLLTSRLEA) is a signal peptide. At 21–703 (IPVLEKSPAH…ETFNMSPMLT (683 aa)) the chain is on the extracellular side. Ig-like C2-type domains lie at 45-142 (PGVR…TARL), 155-232 (PESP…ERIQ), 252-340 (PHLL…YIKV), and 346-432 (PQIV…LQVN). 4 disulfide bridges follow: C68–C126, C173–C220, C276–C324, and C367–C414. N-linked (GlcNAc...) asparagine glycosylation is found at N102 and N209. Residues 429-467 (LQVNPKQIQEPRESGGTHRPNPNQGSKHKQMYPPTPPNV) form a disordered region. Fibronectin type-III domains are found at residues 461-567 (PPTP…LQPG) and 575-670 (VPEL…TQRP). A glycan (N-linked (GlcNAc...) asparagine) is linked at N466. Residues R497, K501, K503, and R541 each coordinate heparin. N557 carries an N-linked (GlcNAc...) asparagine glycan. The segment at 662–692 (LKQGRTQRPKTSTTEEPTLQMGDRDTTTPSH) is disordered. Over residues 665 to 678 (GRTQRPKTSTTEEP) the composition is skewed to polar residues. N-linked (GlcNAc...) asparagine glycosylation is present at N693. The chain crosses the membrane as a helical span at residues 704–724 (GTIGGGAVLILLLISTCLCVC). At 725 to 880 (RRRNSRSRGN…SSGSLNSVGV (156 aa)) the chain is on the cytoplasmic side. Disordered regions lie at residues 728-762 (NSRS…QRQR) and 775-880 (QQQQ…SVGV). Composition is skewed to low complexity over residues 823–837 (RAGG…NNNN) and 864–880 (SSRS…SVGV).

The protein belongs to the immunoglobulin superfamily. IHOG family. As to quaternary structure, homodimer. Heterotetramer; 2 iHog chains bind 2 hh chains when facilitated by heparin, heparin is required to promote high-affinity interactions between hh and iHog.

The protein localises to the membrane. Its function is as follows. Mediates response to the active Hedgehog (Hh) protein signal in embryos, functioning upstream or at the level of patched (ptc). This Drosophila simulans (Fruit fly) protein is Interference hedgehog.